Here is a 92-residue protein sequence, read N- to C-terminus: Large ribosomal subunit protein eL43 (92 aa).

The C4-type zinc finger occupies Cys-39–Cys-60.

Belongs to the eukaryotic ribosomal protein eL43 family.

This chain is Large ribosomal subunit protein eL43 (RPL37a), found in Ostreococcus tauri.